A 155-amino-acid chain; its full sequence is Cytochrome c-550 (155 aa).

The N-terminal stretch at 1–20 (MKISIYATLAAITLALPAAA) is a signal peptide. At glutamine 21 the chain carries Pyrrolidone carboxylic acid. Heme c-binding residues include cysteine 35, cysteine 38, histidine 39, and methionine 120. Residues 150–155 (AEGESN) constitute a propeptide that is removed on maturation.

Binds 1 heme c group covalently per subunit.

The polypeptide is Cytochrome c-550 (cycA) (Paracoccus denitrificans).